The chain runs to 164 residues: NADH-quinone oxidoreductase subunit I (164 aa).

4Fe-4S ferredoxin-type domains lie at Leu55–Glu85 and Thr95–Asn124. Residues Cys65, Cys68, Cys71, Cys75, Cys104, Cys107, Cys110, and Cys114 each coordinate [4Fe-4S] cluster.

Belongs to the complex I 23 kDa subunit family. NDH-1 is composed of 14 different subunits. Subunits NuoA, H, J, K, L, M, N constitute the membrane sector of the complex. The cofactor is [4Fe-4S] cluster.

The protein localises to the cell inner membrane. The catalysed reaction is a quinone + NADH + 5 H(+)(in) = a quinol + NAD(+) + 4 H(+)(out). Its function is as follows. NDH-1 shuttles electrons from NADH, via FMN and iron-sulfur (Fe-S) centers, to quinones in the respiratory chain. The immediate electron acceptor for the enzyme in this species is believed to be ubiquinone. Couples the redox reaction to proton translocation (for every two electrons transferred, four hydrogen ions are translocated across the cytoplasmic membrane), and thus conserves the redox energy in a proton gradient. In Dinoroseobacter shibae (strain DSM 16493 / NCIMB 14021 / DFL 12), this protein is NADH-quinone oxidoreductase subunit I.